A 264-amino-acid polypeptide reads, in one-letter code: 3-methyl-2-oxobutanoate hydroxymethyltransferase (264 aa).

Asp-45 and Asp-84 together coordinate Mg(2+). 3-methyl-2-oxobutanoate-binding positions include 45–46, Asp-84, and Lys-112; that span reads DS. Residue Glu-114 participates in Mg(2+) binding. Glu-181 acts as the Proton acceptor in catalysis.

It belongs to the PanB family. In terms of assembly, homodecamer; pentamer of dimers. It depends on Mg(2+) as a cofactor.

The protein localises to the cytoplasm. The enzyme catalyses 3-methyl-2-oxobutanoate + (6R)-5,10-methylene-5,6,7,8-tetrahydrofolate + H2O = 2-dehydropantoate + (6S)-5,6,7,8-tetrahydrofolate. Its pathway is cofactor biosynthesis; (R)-pantothenate biosynthesis; (R)-pantoate from 3-methyl-2-oxobutanoate: step 1/2. Its function is as follows. Catalyzes the reversible reaction in which hydroxymethyl group from 5,10-methylenetetrahydrofolate is transferred onto alpha-ketoisovalerate to form ketopantoate. This chain is 3-methyl-2-oxobutanoate hydroxymethyltransferase, found in Escherichia coli O127:H6 (strain E2348/69 / EPEC).